The sequence spans 167 residues: uncharacterized protein (167 aa).

Residues 1–13 (MQGDIRRKKDLLP) are compositionally biased toward basic and acidic residues. Disordered stretches follow at residues 1–26 (MQGDIRRKKDLLPRYKTGSKYNSRRR) and 67–167 (ESHS…ILDN). Residues 71–80 (SDVSASASDH) show a composition bias toward low complexity. Residues 102–156 (VPKEKFNNEVAKQQEVKNLENDLKPQIDSEKQKQINKDKKEQKQQLQKEKQDLAK) show a composition bias toward basic and acidic residues.

This is an uncharacterized protein from Saccharomyces cerevisiae (strain ATCC 204508 / S288c) (Baker's yeast).